Reading from the N-terminus, the 215-residue chain is 3-isopropylmalate dehydratase small subunit (215 aa).

This sequence belongs to the LeuD family. LeuD type 1 subfamily. As to quaternary structure, heterodimer of LeuC and LeuD.

The catalysed reaction is (2R,3S)-3-isopropylmalate = (2S)-2-isopropylmalate. The protein operates within amino-acid biosynthesis; L-leucine biosynthesis; L-leucine from 3-methyl-2-oxobutanoate: step 2/4. Functionally, catalyzes the isomerization between 2-isopropylmalate and 3-isopropylmalate, via the formation of 2-isopropylmaleate. The protein is 3-isopropylmalate dehydratase small subunit of Acinetobacter baumannii (strain AB307-0294).